The primary structure comprises 132 residues: Chemokine-like protein TAFA-5 (132 aa).

A signal peptide spans 1–43 (MAPSPRTGSRQDATALPSMSSTFWAFMILASLLIAYCSQLAAG). Asparagine 113 is a glycosylation site (N-linked (GlcNAc...) asparagine).

The protein belongs to the TAFA family.

Its subcellular location is the secreted. Acts as a chemokine-like protein by regulating cell proliferation and migration through activation of G protein-coupled receptors (GPCRs), such as S1PR2 and FPR2. Stimulates chemotactic migration of macrophages mediated by the MAPK3/ERK1 and AKT1 pathway. Blocks TNFSF11/RANKL-induced osteoclast formation from macrophages by inhibiting up-regulation of osteoclast fusogenic and differentiation genes. Stimulation of macrophage migration and inhibition of osteoclast formation is mediated through the GPCR FPR2. Acts as an adipokine by negatively regulating vascular smooth muscle cell (VSMC) proliferation and migration in response to platelet-derived growth factor stimulation via GPCR S1PR2 and G protein GNA12/GNA13-transmitted RHOA signaling. Inhibits injury-induced cell proliferation and neointima formation in the femoral arteries. This Bos taurus (Bovine) protein is Chemokine-like protein TAFA-5 (TAFA5).